The primary structure comprises 61 residues: Potassium channel toxin kappa-KTx 2.8 (61 aa).

Residues 1 to 21 form the signal peptide; it reads GTVYVFLLLLAFGIFTDISNA. Positions 22–35 are excised as a propeptide; it reads CSEQMDDEDSYEVE. Cystine bridges form between C41-C59 and C45-C55.

Belongs to the short scorpion toxin superfamily. Potassium channel inhibitor kappa-KTx family. Kappa-KTx 2 subfamily. As to expression, expressed by the venom gland.

It localises to the secreted. Voltage-gated potassium channel inhibitor (Kv) that acts on Kv1.3/KCNA3 and Kv7.1/KCNQ1. 1 uM of the toxin inhibits Kv1.3/KCNA3 currents by 35.1%, whereas 10 uM of the toxin inhibits Kv7.1/KCNQ1 currents by 44.9%. This is Potassium channel toxin kappa-KTx 2.8 from Heterometrus petersii (Asian forest scorpion).